Consider the following 436-residue polypeptide: Hydrogenobyrinate a,c-diamide synthase (436 aa).

Residues 244 to 435 enclose the GATase cobBQ-type domain; it reads RIAVARDDAF…MHVIDFSGEA (192 aa). The active-site Nucleophile is C327.

It belongs to the CobB/CbiA family. It depends on Mg(2+) as a cofactor.

It catalyses the reaction hydrogenobyrinate + 2 L-glutamine + 2 ATP + 2 H2O = hydrogenobyrinate a,c-diamide + 2 L-glutamate + 2 ADP + 2 phosphate + 2 H(+). The protein operates within cofactor biosynthesis; adenosylcobalamin biosynthesis; cob(II)yrinate a,c-diamide from precorrin-2 (aerobic route): step 9/10. Catalyzes the ATP-dependent amidation of the two carboxylate groups at positions a and c of hydrogenobyrinate, using either L-glutamine or ammonia as the nitrogen source. The polypeptide is Hydrogenobyrinate a,c-diamide synthase (Brucella suis biovar 1 (strain 1330)).